Here is a 348-residue protein sequence, read N- to C-terminus: Erythronate-4-phosphate dehydrogenase (348 aa).

Residues threonine 46 and threonine 67 each coordinate substrate. Aspartate 147 is a binding site for NAD(+). The active site involves arginine 209. Residue aspartate 233 participates in NAD(+) binding. The active site involves glutamate 238. The Proton donor role is filled by histidine 255. Glycine 258 is an NAD(+) binding site. Tyrosine 259 contributes to the substrate binding site.

This sequence belongs to the D-isomer specific 2-hydroxyacid dehydrogenase family. PdxB subfamily. Homodimer.

It localises to the cytoplasm. It carries out the reaction 4-phospho-D-erythronate + NAD(+) = (R)-3-hydroxy-2-oxo-4-phosphooxybutanoate + NADH + H(+). Its pathway is cofactor biosynthesis; pyridoxine 5'-phosphate biosynthesis; pyridoxine 5'-phosphate from D-erythrose 4-phosphate: step 2/5. Catalyzes the oxidation of erythronate-4-phosphate to 3-hydroxy-2-oxo-4-phosphonooxybutanoate. The polypeptide is Erythronate-4-phosphate dehydrogenase (Bacteroides fragilis (strain ATCC 25285 / DSM 2151 / CCUG 4856 / JCM 11019 / LMG 10263 / NCTC 9343 / Onslow / VPI 2553 / EN-2)).